Here is a 633-residue protein sequence, read N- to C-terminus: MTHNFAENYDIIVVGAGHAGVEASLAASRMGCKTLLATINLEMLAFMPCNPSIGGSAKGIVVREIDALGGEMGKNIDKTYIQMKMLNTGKGPAVRALRAQADKALYAQTMKQTVEKQENLTLRQAMIDEILVEDGKVVGVRTATNQKFSAKSVVITTGTALRGEIILGELKYSSGPNNSLASVTLADNLRDLGLEIGRFKTGTPPRVKASSINYEKTEIQPGDEQPNHFSFMSRDEDYITDQVPCWLTYTNTLSHDIINQNLHRAPMFSGIVKGVGPRYCPSIEDKIVRFADKERHQLFLEPEGRHTEEVYVQGLSTSLPEDVQVDLLRSIKGLENAEMMRTGYAIEYDIVLPHQLRATLETKVIAGLFTAGQTNGTSGYEEAAGQGLVAGINAALKVQGKPELILKRSDAYIGVMIDDLVTKGTLEPYRLLTSRAEYRLILRHDNADMRLTEIGYEIGLVDEERYAIFKKRQMQFENELERLDSIKLKPVSETNKRIQELGFKPLTDALTAKEFMRRPQITYAVATDFVGCADEPLDSKVIELLETEIKYEGYIKKALDQVAKMKRMEEKRIPPHIDWDDIDSIATEARQKFKKINPETLGQASRISGVNPADISILMVYLEGRQKGRKNIN.

FAD-binding positions include G15–G20, I127, and S182. G276–F290 provides a ligand contact to NAD(+). Q373 provides a ligand contact to FAD.

It belongs to the MnmG family. Homodimer. Heterotetramer of two MnmE and two MnmG subunits. FAD is required as a cofactor.

Its subcellular location is the cytoplasm. Its function is as follows. NAD-binding protein involved in the addition of a carboxymethylaminomethyl (cmnm) group at the wobble position (U34) of certain tRNAs, forming tRNA-cmnm(5)s(2)U34. This is tRNA uridine 5-carboxymethylaminomethyl modification enzyme MnmG from Streptococcus agalactiae serotype Ia (strain ATCC 27591 / A909 / CDC SS700).